Here is a 435-residue protein sequence, read N- to C-terminus: Diguanylate cyclase TpbB (435 aa).

Residues 1–22 lie on the Cytoplasmic side of the membrane; sequence MNRRRRYTGSNPSLRRVLYRAH. A helical membrane pass occupies residues 23-43; it reads LGVALVAVFTAGLAVTLVGLL. At 44–154 the chain is on the periplasmic side; sequence TLRAYADPNQ…VKGSGGSLLR (111 aa). Residues 155-175 traverse the membrane as a helical segment; that stretch reads FLLTGFAGMVLCLLLTALGAF. At 176-435 the chain is on the cytoplasmic side; it reads YLSRRLVRGI…DSATPEAPPK (260 aa). In terms of domain architecture, HAMP spans 183–236; that stretch reads RGIVGPLDQLAKVAHTVRRERDFEKRVPEAGIAELSQLGEDFNALLDELESWQA. The region spanning 279 to 415 is the GGDEF domain; sequence EQLAVLFIDS…GSRRLAELND (137 aa). 2 residues coordinate Mg(2+): Ser-288 and Asp-330. Asp-330 (proton acceptor) is an active-site residue. Positions 414-426 are enriched in basic and acidic residues; it reads NDPRILQEEKEID. Positions 414 to 435 are disordered; it reads NDPRILQEEKEIDSATPEAPPK.

It depends on Mg(2+) as a cofactor. In terms of processing, phosphorylated at both Tyr residues and Ser/Thr residues. Dephosphorylated and inactivated by TpbA.

The protein localises to the cell inner membrane. The catalysed reaction is 2 GTP = 3',3'-c-di-GMP + 2 diphosphate. The protein operates within purine metabolism; 3',5'-cyclic di-GMP biosynthesis. Activity is tightly controlled by YfiR, a small periplasmic protein, and the OmpA/Pal-like outer-membrane lipoprotein YfiB. Diguanylate cyclase activity is inhibited by the specific interaction of YfiR with the TpbB periplasmic domain and is activated by YfiB, which releases the YfiR-mediated repression through sequestration of YfiR to the outer membrane. Activity is also controlled by dephosphorylation of the periplasmic domain by the tyrosine phosphatase TpbA. Its function is as follows. Catalyzes the synthesis of cyclic-di-GMP (c-di-GMP) via the condensation of 2 GTP molecules. Important for the regulation of biofilm maintenance when exposed to peroxide. Functionally, part of the YfiB-TpbB-YfiR (or yfiBNR) system, encoding a tripartite signaling module that modulates intracellular c-di-GMP levels. The system is a key regulator of the small colony variant (SCV) phenotype, and plays an important role in biofilm formation and in vivo persistence. The c-di-GMP produced by TpbB/YfiN stimulates the production of the Pel and Psl exopolysaccharides, which promotes surface attachment, generates an SCV phenotype and confers resistance against phagocytosis. The protein is Diguanylate cyclase TpbB of Pseudomonas aeruginosa (strain UCBPP-PA14).